A 358-amino-acid chain; its full sequence is Probable translocation protein Y4yK (358 aa).

The protein belongs to the FliN/MopA/SpaO family.

Functionally, could be involved in the secretion of an unknown factor. In Sinorhizobium fredii (strain NBRC 101917 / NGR234), this protein is Probable translocation protein Y4yK.